A 516-amino-acid polypeptide reads, in one-letter code: MSDEESIKTRLKLRPVAIDTYRENVAYLHRECSVYRAEGFQALAKIRVGCNGKQIEAVLNVVDDVCIVAPDELGLSEQAFQRFGEPAGQLVNVAQAEPPLSMDGVRRKIGGERLDYGDYQAITSDIAKGRYSKMEMAAFLVATGQNGLDRDEVLSLTRAMLETGVRLSWNEPLVADKHCIGGIPGNRTSLLIVPIVAAHGMLIPKTSSRAITSPAGTADTMEVLARTDLAPESLDRLVRMERGCLAWGGTTRLAPVDDMLISVERPLGIDSQGQMVASILSKKLAAGATHLLLDIPVGPTAKVRQMRDAMSLRKLFEYVGDRVGLHLEAVITDGAQPVGRGIGPVLEVRDVMQVLENDPEAPVDLREKSLRLAGRILEFDPDVRGGFGYSIARDILESGRALAKMHRIIDAQGRQERRLEPGRLVFEVRAERAGVVVGIDNFFLAQTARLAGAPMSRGAGVDLLNKLGDTVEEGQPLYRVYAEFPANFEFAREFTRTRSGYNIGDAAFLTKTHMEF.

It belongs to the thymidine/pyrimidine-nucleoside phosphorylase family. Type 2 subfamily.

The enzyme catalyses thymidine + phosphate = 2-deoxy-alpha-D-ribose 1-phosphate + thymine. The chain is Putative thymidine phosphorylase from Methylococcus capsulatus (strain ATCC 33009 / NCIMB 11132 / Bath).